Consider the following 280-residue polypeptide: Urease accessory protein UreD (280 aa).

The protein belongs to the UreD family. UreD, UreF and UreG form a complex that acts as a GTP-hydrolysis-dependent molecular chaperone, activating the urease apoprotein by helping to assemble the nickel containing metallocenter of UreC. The UreE protein probably delivers the nickel.

The protein resides in the cytoplasm. Required for maturation of urease via the functional incorporation of the urease nickel metallocenter. The protein is Urease accessory protein UreD of Staphylococcus saprophyticus subsp. saprophyticus (strain ATCC 15305 / DSM 20229 / NCIMB 8711 / NCTC 7292 / S-41).